Here is a 335-residue protein sequence, read N- to C-terminus: Beta-ketoacyl-[acyl-carrier-protein] synthase III 1 (335 aa).

Active-site residues include C116 and H256. An ACP-binding region spans residues 257–261 (QANQR). N286 is a catalytic residue.

It belongs to the thiolase-like superfamily. FabH family. Homodimer.

It is found in the cytoplasm. The catalysed reaction is malonyl-[ACP] + acetyl-CoA + H(+) = 3-oxobutanoyl-[ACP] + CO2 + CoA. It participates in lipid metabolism; fatty acid biosynthesis. In terms of biological role, catalyzes the condensation reaction of fatty acid synthesis by the addition to an acyl acceptor of two carbons from malonyl-ACP. Catalyzes the first condensation reaction which initiates fatty acid synthesis and may therefore play a role in governing the total rate of fatty acid production. Possesses both acetoacetyl-ACP synthase and acetyl transacylase activities. Its substrate specificity determines the biosynthesis of branched-chain and/or straight-chain of fatty acids. In Bacteroides thetaiotaomicron (strain ATCC 29148 / DSM 2079 / JCM 5827 / CCUG 10774 / NCTC 10582 / VPI-5482 / E50), this protein is Beta-ketoacyl-[acyl-carrier-protein] synthase III 1.